The primary structure comprises 418 residues: 4-hydroxy-3-methylbut-2-en-1-yl diphosphate synthase (flavodoxin) (418 aa).

The [4Fe-4S] cluster site is built by Cys-305, Cys-308, Cys-351, and Glu-358.

The protein belongs to the IspG family. Requires [4Fe-4S] cluster as cofactor.

The enzyme catalyses (2E)-4-hydroxy-3-methylbut-2-enyl diphosphate + oxidized [flavodoxin] + H2O + 2 H(+) = 2-C-methyl-D-erythritol 2,4-cyclic diphosphate + reduced [flavodoxin]. It participates in isoprenoid biosynthesis; isopentenyl diphosphate biosynthesis via DXP pathway; isopentenyl diphosphate from 1-deoxy-D-xylulose 5-phosphate: step 5/6. In terms of biological role, converts 2C-methyl-D-erythritol 2,4-cyclodiphosphate (ME-2,4cPP) into 1-hydroxy-2-methyl-2-(E)-butenyl 4-diphosphate. In Bartonella bacilliformis (strain ATCC 35685 / KC583 / Herrer 020/F12,63), this protein is 4-hydroxy-3-methylbut-2-en-1-yl diphosphate synthase (flavodoxin).